Reading from the N-terminus, the 437-residue chain is Photosystem II stability/assembly factor HCF136, chloroplastic (437 aa).

It belongs to the Ycf48 family.

It localises to the plastid. The protein resides in the chloroplast thylakoid membrane. Functionally, essential for photosystem II (PSII) biogenesis; required for assembly of an early intermediate in PSII assembly that includes D2 (psbD) and cytochrome b559. This is Photosystem II stability/assembly factor HCF136, chloroplastic from Cyanidioschyzon merolae (strain NIES-3377 / 10D) (Unicellular red alga).